Consider the following 275-residue polypeptide: Gibberellin-regulated protein 14 (275 aa).

Positions 1-21 are cleaved as a signal peptide; the sequence is MALSLLSVFIFFHVFTNVVFA. A disordered region spans residues 34 to 207; the sequence is PTPTLPSPSP…TAPPVKPPTP (174 aa). The segment covering 36–207 has biased composition (pro residues); the sequence is PTLPSPSPAT…TAPPVKPPTP (172 aa).

The protein belongs to the GASA family. In terms of processing, six disulfide bonds may be present. In terms of tissue distribution, expressed in flower abscission zone, style, stamen filaments and lateral roots.

It localises to the secreted. Functionally, gibberellin-regulated protein that may function in hormonal controlled steps of development such as seed germination, flowering and seed maturation. This is Gibberellin-regulated protein 14 (GASA14) from Arabidopsis thaliana (Mouse-ear cress).